Consider the following 103-residue polypeptide: Large ribosomal subunit protein uL24 (103 aa).

The protein belongs to the universal ribosomal protein uL24 family. In terms of assembly, part of the 50S ribosomal subunit.

In terms of biological role, one of two assembly initiator proteins, it binds directly to the 5'-end of the 23S rRNA, where it nucleates assembly of the 50S subunit. Functionally, one of the proteins that surrounds the polypeptide exit tunnel on the outside of the subunit. This Actinobacillus pleuropneumoniae serotype 5b (strain L20) protein is Large ribosomal subunit protein uL24.